A 517-amino-acid polypeptide reads, in one-letter code: Serine hydroxymethyltransferase 1, mitochondrial (517 aa).

The transit peptide at 1-31 (MAMALALRRLSSSADKPLQRLFNGGHLYSMS) directs the protein to the mitochondrion. At Lys287 the chain carries N6-(pyridoxal phosphate)lysine.

This sequence belongs to the SHMT family. Homotetramer. The cofactor is pyridoxal 5'-phosphate.

The protein localises to the mitochondrion. The enzyme catalyses (6R)-5,10-methylene-5,6,7,8-tetrahydrofolate + glycine + H2O = (6S)-5,6,7,8-tetrahydrofolate + L-serine. It functions in the pathway one-carbon metabolism; tetrahydrofolate interconversion. In terms of biological role, catalyzes the interconversion of serine and glycine. The sequence is that of Serine hydroxymethyltransferase 1, mitochondrial from Flaveria pringlei.